The primary structure comprises 793 residues: Putative potassium transporter 8 (793 aa).

Topologically, residues 1–22 (MDLEFGRGMRSPQRDSWKTTLL) are cytoplasmic. A helical membrane pass occupies residues 23-43 (LAYQSLGVVYGDLSISPLYVF). The Extracellular portion of the chain corresponds to 44 to 59 (KSTFAEDIQHSETNEE). The helical transmembrane segment at 60-80 (IFGVLSFVFWTLTLIPLIKYV) threads the bilayer. The Cytoplasmic portion of the chain corresponds to 81 to 151 (SIVLRADDNG…EKHKKLHTAL (71 aa)). The chain crosses the membrane as a helical span at residues 152-172 (LIMVLIGTCMVIGDGVLTPAI). Residues 173–191 (SVFSAVSGLEFSLSKDHRE) lie on the Extracellular side of the membrane. Residues 192 to 212 (YAVIPITCVILAFLFALQHYG) traverse the membrane as a helical segment. The Cytoplasmic segment spans residues 213-215 (THR). A helical transmembrane segment spans residues 216-236 (VGFLFAPIVLAWLICMSALGL). At 237–264 (YNIIHWNPHVYQALNPCYMFKFLKKTRK) the chain is on the extracellular side. The chain crosses the membrane as a helical span at residues 265-285 (YGWMSLGGILLCMTGSEAMFA). Topologically, residues 286-292 (DLGHFSY) are cytoplasmic. A helical membrane pass occupies residues 293–313 (SAIQLAFTSLVYPALILAYMG). The Extracellular portion of the chain corresponds to 314–343 (QAAYLSKHHDFYSNSQVGFYIAVPDKVRWP). The helical transmembrane segment at 344-364 (VLVLAILASVVGSQAIISGTF) threads the bilayer. The Cytoplasmic segment spans residues 365 to 391 (SIINQSQSLSCFPRVKVVHTSDKIHGQ). The chain crosses the membrane as a helical span at residues 392–412 (IYIPEINWLLMILCIAVTVGF). Residues 413-422 (RDTKHMGNAS) are Extracellular-facing. An N-linked (GlcNAc...) asparagine glycan is attached at Asn420. The helical transmembrane segment at 423–443 (GLAVITVMLVTTCLTSLVIML) threads the bilayer. The Cytoplasmic portion of the chain corresponds to 444–448 (CWRRP). Residues 449–469 (PVLALCFLLFFGSVEALYFSA) form a helical membrane-spanning segment. The Extracellular segment spans residues 470-473 (SLIK). The helical transmembrane segment at 474 to 494 (FLEGAWLPILLALFLMAVMLV) threads the bilayer. Over 495-793 (WHYTTIKKYE…LLEVGMVYVL (299 aa)) the chain is Cytoplasmic. A compositionally biased stretch (polar residues) spans 664 to 675 (DSVQHSSAASVE). Residues 664 to 698 (DSVQHSSAASVETTTTRRRSGGGDDDGSPGGGGGR) are disordered.

This sequence belongs to the HAK/KUP transporter (TC 2.A.72.3) family.

The protein resides in the membrane. Its function is as follows. High-affinity potassium transporter. The protein is Putative potassium transporter 8 (HAK8) of Oryza sativa subsp. japonica (Rice).